The following is a 491-amino-acid chain: Aspartyl/glutamyl-tRNA(Asn/Gln) amidotransferase subunit B (491 aa).

This sequence belongs to the GatB/GatE family. GatB subfamily. Heterotrimer of A, B and C subunits.

The enzyme catalyses L-glutamyl-tRNA(Gln) + L-glutamine + ATP + H2O = L-glutaminyl-tRNA(Gln) + L-glutamate + ADP + phosphate + H(+). The catalysed reaction is L-aspartyl-tRNA(Asn) + L-glutamine + ATP + H2O = L-asparaginyl-tRNA(Asn) + L-glutamate + ADP + phosphate + 2 H(+). Its function is as follows. Allows the formation of correctly charged Asn-tRNA(Asn) or Gln-tRNA(Gln) through the transamidation of misacylated Asp-tRNA(Asn) or Glu-tRNA(Gln) in organisms which lack either or both of asparaginyl-tRNA or glutaminyl-tRNA synthetases. The reaction takes place in the presence of glutamine and ATP through an activated phospho-Asp-tRNA(Asn) or phospho-Glu-tRNA(Gln). The protein is Aspartyl/glutamyl-tRNA(Asn/Gln) amidotransferase subunit B of Nostoc sp. (strain PCC 7120 / SAG 25.82 / UTEX 2576).